Reading from the N-terminus, the 340-residue chain is Anthranilate phosphoribosyltransferase (340 aa).

5-phospho-alpha-D-ribose 1-diphosphate contacts are provided by residues G78, 81 to 82, T86, 88 to 91, 106 to 114, and S118; these read GD, NIST, and KHGNRSVSS. G78 is a binding site for anthranilate. Position 90 (S90) interacts with Mg(2+). N109 contributes to the anthranilate binding site. R164 serves as a coordination point for anthranilate. 2 residues coordinate Mg(2+): D223 and E224.

Belongs to the anthranilate phosphoribosyltransferase family. In terms of assembly, homodimer. Mg(2+) serves as cofactor.

The enzyme catalyses N-(5-phospho-beta-D-ribosyl)anthranilate + diphosphate = 5-phospho-alpha-D-ribose 1-diphosphate + anthranilate. The protein operates within amino-acid biosynthesis; L-tryptophan biosynthesis; L-tryptophan from chorismate: step 2/5. In terms of biological role, catalyzes the transfer of the phosphoribosyl group of 5-phosphorylribose-1-pyrophosphate (PRPP) to anthranilate to yield N-(5'-phosphoribosyl)-anthranilate (PRA). The polypeptide is Anthranilate phosphoribosyltransferase (Bacillus pumilus (strain SAFR-032)).